Reading from the N-terminus, the 1446-residue chain is ABC transporter G family member 53 (1446 aa).

Residues 153–426 (ANTLHITPNR…FESVGFKCPE (274 aa)) enclose the ABC transporter 1 domain. Position 186 to 193 (186 to 193 (GPPGAGKT)) interacts with ATP. The ABC transmembrane type-2 1 domain maps to 504-717 (ELLKANIDRE…AQNAISVNEF (214 aa)). The next 6 membrane-spanning stretches (helical) occupy residues 523–543 (VYIF…TVFI), 555–575 (GGIY…NGLA), 610–630 (TPLS…VIGF), 641–661 (FLLL…IAGF), 666–686 (VVAS…GGFI), and 752–772 (IGVG…TICL). Residues 849–1101 (ITFEDIRYSV…ELIRYFESIE (253 aa)) enclose the ABC transporter 2 domain. 894-901 (GVSGAGKT) contributes to the ATP binding site. The 215-residue stretch at 1174-1388 (TQCLACLWKQ…TLYGLVTSQF (215 aa)) folds into the ABC transmembrane type-2 2 domain. Helical transmembrane passes span 1195 to 1215 (AVKY…FWGV), 1225 to 1242 (LFNA…MGVQ), 1281 to 1301 (LPYI…MIGF), 1308 to 1328 (FFWY…YGMM), 1338 to 1358 (VASV…GFII), 1363 to 1383 (IPIW…LYGL), and 1415 to 1435 (FLWV…FLFG).

It belongs to the ABC transporter superfamily. ABCG family. PDR (TC 3.A.1.205) subfamily.

The protein resides in the membrane. May be a general defense protein. This Oryza sativa subsp. japonica (Rice) protein is ABC transporter G family member 53.